The following is a 116-amino-acid chain: Protein RALF-like 33 (116 aa).

The signal sequence occupies residues 1–23; sequence MRGLSTKPVAIIIAILTVHFLFA. A propeptide spans 24-67 (removed in mature form); that stretch reads AVTSQSSGDFVPIESKCNGTIAECSLSTAEEEFEMDSEINRRIL. The N-linked (GlcNAc...) asparagine glycan is linked to N41. Disulfide bonds link C85-C95 and C108-C114.

The protein belongs to the plant rapid alkalinization factor (RALF) family. Proteolytically cleaved, probably by S1P, a subtilisin-like serine protease (subtilase). As to expression, expressed in roots, stems, leaves and plants.

It localises to the secreted. Functionally, cell signaling peptide that may regulate plant stress, growth, and development. Mediates a rapid alkalinization of extracellular space by mediating a transient increase in the cytoplasmic Ca(2+) concentration leading to a calcium-dependent signaling events through a cell surface receptor and a concomitant activation of some intracellular mitogen-activated protein kinases. The chain is Protein RALF-like 33 (RALFL33) from Arabidopsis thaliana (Mouse-ear cress).